A 130-amino-acid chain; its full sequence is MKSLGRHLVAEFYECDREVLDNVQLIEQEMKQAAYESGATIVTSTFHRFLPYGVSGVVVISESHLTIHTWPEYGYAAIDLFTCGEDVDPWKAFEHLKKALKAKRVHVVEHERGRYDEIGIPEDSPHKAAV.

Ser-63 serves as the catalytic Schiff-base intermediate with substrate; via pyruvic acid. Ser-63 is subject to Pyruvic acid (Ser); by autocatalysis. Catalysis depends on His-68, which acts as the Proton acceptor; for processing activity. The active-site Proton donor; for catalytic activity is the Cys-83.

The protein belongs to the prokaryotic AdoMetDC family. Type 1 subfamily. Heterotetramer of two alpha and two beta chains arranged as a dimer of alpha/beta heterodimers. Pyruvate is required as a cofactor. Post-translationally, is synthesized initially as an inactive proenzyme. Formation of the active enzyme involves a self-maturation process in which the active site pyruvoyl group is generated from an internal serine residue via an autocatalytic post-translational modification. Two non-identical subunits are generated from the proenzyme in this reaction, and the pyruvate is formed at the N-terminus of the alpha chain, which is derived from the carboxyl end of the proenzyme. The post-translation cleavage follows an unusual pathway, termed non-hydrolytic serinolysis, in which the side chain hydroxyl group of the serine supplies its oxygen atom to form the C-terminus of the beta chain, while the remainder of the serine residue undergoes an oxidative deamination to produce ammonia and the pyruvoyl group blocking the N-terminus of the alpha chain.

The enzyme catalyses S-adenosyl-L-methionine + H(+) = S-adenosyl 3-(methylsulfanyl)propylamine + CO2. It participates in amine and polyamine biosynthesis; S-adenosylmethioninamine biosynthesis; S-adenosylmethioninamine from S-adenosyl-L-methionine: step 1/1. Catalyzes the decarboxylation of S-adenosylmethionine to S-adenosylmethioninamine (dcAdoMet), the propylamine donor required for the synthesis of the polyamines spermine and spermidine from the diamine putrescine. This Thermotoga maritima (strain ATCC 43589 / DSM 3109 / JCM 10099 / NBRC 100826 / MSB8) protein is S-adenosylmethionine decarboxylase proenzyme (speH).